The primary structure comprises 686 residues: MHAGLLGLSALLQAAEQSARLYTVAYYFTTGRLLWGWLALAVLLPGFLVQALSYLWFRADGHPGHCSLVMLHLLQLGVWKRHWDAALTALQKEPEAPHRGWLQLQEADLSALRLLEALLQTGPHLLLQTYVFLASDFTDIVPGVSTLFSWSSLSWALVSYTRFMGFMKPGHLAMPWAALFCQQLWRMGMLGTRVMSLVLFYKAYHFWVFVVAGAHWLVMTFWLVAQQSDIIDSTCHWRLFNLLVGAVYILCYLSFWDSPSRNRMVTFYMVMLLENTILLLLATDFLQGASWTSLQTIAGVLSGFLIGSVSLVIYYSLLHPKSTDIWQGCLRKSCGIAGGDKTERRASPRATDLAGKRTESSGSCQGASYELTILGKPPTPEQVPPEAGLGTQVAVEDSFLSHHHWLWVKLALKTGNMSKINAAFGDDNPVYCPPAWGLSQQDDLQRKALSAQRELPSSSRHPSTLENSSAFEGVSKAEADPLETSSYVSFASDQQDEAPTQNPAATQGEGTPKEGADAVSGTQGKGTGGQQRGGEGQQSSTLYFSATAEVATSSQQEGSPATLQTAHSGRRLGKSSPAQPASPHPVGLAPFPATMADISPILGTGPCRGFCPSAGFPGRTLSISELEEPLEPTRELSHHAAVGVWMSLPQLRTAHEPCLTSTPKSESIQTDCSCREQMKQEPSFFI.

The next 5 membrane-spanning stretches (helical) occupy residues Leu33–Ser53, His205–Ala225, Leu239–Pro259, Val265–Phe285, and Ile297–Leu317. 3 disordered regions span residues Asp340–Gly362, Leu444–Ala470, and Phe490–Ala589. Polar residues-rich tracts occupy residues Leu455–Ala470 and Phe490–Glu509. The span at Gln523–Gly536 shows a compositional bias: gly residues. Residues Val550–His567 are compositionally biased toward polar residues.

It belongs to the XK family.

It localises to the cell membrane. This is XK-related protein 5 from Pan troglodytes (Chimpanzee).